The following is a 323-amino-acid chain: Tumor-associated calcium signal transducer 2 (323 aa).

Positions 1 to 26 are cleaved as a signal peptide; it reads MARGPGLAPPPLRLPLLLLVLAAVTG. Residues 27 to 274 are Extracellular-facing; sequence HTAAQDNCTC…PPKFSMKRLT (248 aa). A glycan (N-linked (GlcNAc...) asparagine) is linked at Asn-33. The region spanning 70–145 is the Thyroglobulin type-1 domain; the sequence is TSKCLLLKAR…TDKGDLSLRC (76 aa). 3 disulfides stabilise this stretch: Cys-73/Cys-108, Cys-119/Cys-125, and Cys-127/Cys-145. Asn-120 is a glycosylation site (N-linked (GlcNAc...) asparagine). N-linked (GlcNAc...) asparagine glycans are attached at residues Asn-168 and Asn-208. The helical transmembrane segment at 275-297 threads the bilayer; that stretch reads AGLIAVIVVVVVALVAGMAVLVI. The Cytoplasmic portion of the chain corresponds to 298–323; the sequence is TNRRKSGKYKKVEIKELGELRKEPSL.

Belongs to the EPCAM family. The N-terminus is blocked. In terms of tissue distribution, placenta, pancreatic carcinoma cell lines.

It localises to the membrane. In terms of biological role, may function as a growth factor receptor. This Homo sapiens (Human) protein is Tumor-associated calcium signal transducer 2 (TACSTD2).